Consider the following 433-residue polypeptide: C4-dicarboxylate transport protein (433 aa).

The next 8 membrane-spanning stretches (helical) occupy residues 8 to 28 (ILYV…HFWP), 44 to 64 (LIKM…IAGM), 78 to 98 (LLYF…AAHL), 148 to 168 (GDIL…AVLG), 188 to 208 (IVHV…AFTI), 222 to 242 (LIGT…GTIA), 307 to 327 (IYMT…LTLM), and 355 to 375 (AATL…ILGI).

It belongs to the dicarboxylate/amino acid:cation symporter (DAACS) (TC 2.A.23) family.

The protein localises to the cell inner membrane. In terms of biological role, responsible for the transport of dicarboxylates such as succinate, fumarate, and malate from the periplasm across the membrane. This chain is C4-dicarboxylate transport protein, found in Cupriavidus taiwanensis (strain DSM 17343 / BCRC 17206 / CCUG 44338 / CIP 107171 / LMG 19424 / R1) (Ralstonia taiwanensis (strain LMG 19424)).